Reading from the N-terminus, the 140-residue chain is Ribosome-binding factor A (140 aa).

It belongs to the RbfA family. In terms of assembly, monomer. Binds 30S ribosomal subunits, but not 50S ribosomal subunits or 70S ribosomes.

It localises to the cytoplasm. One of several proteins that assist in the late maturation steps of the functional core of the 30S ribosomal subunit. Associates with free 30S ribosomal subunits (but not with 30S subunits that are part of 70S ribosomes or polysomes). Required for efficient processing of 16S rRNA. May interact with the 5'-terminal helix region of 16S rRNA. In Cereibacter sphaeroides (strain ATCC 17023 / DSM 158 / JCM 6121 / CCUG 31486 / LMG 2827 / NBRC 12203 / NCIMB 8253 / ATH 2.4.1.) (Rhodobacter sphaeroides), this protein is Ribosome-binding factor A.